Consider the following 1643-residue polypeptide: DNA-directed RNA polymerase subunit beta' (1643 aa).

Residues cysteine 64, cysteine 66, cysteine 79, and cysteine 82 each coordinate Zn(2+). Mg(2+) is bound by residues aspartate 684, aspartate 686, and aspartate 688. Zn(2+)-binding residues include cysteine 1046, cysteine 1239, cysteine 1246, and cysteine 1249.

Belongs to the RNA polymerase beta' chain family. In terms of assembly, the RNAP catalytic core consists of 2 alpha, 1 beta, 1 beta' and 1 omega subunit. When a sigma factor is associated with the core the holoenzyme is formed, which can initiate transcription. The cofactor is Mg(2+). It depends on Zn(2+) as a cofactor.

It carries out the reaction RNA(n) + a ribonucleoside 5'-triphosphate = RNA(n+1) + diphosphate. In terms of biological role, DNA-dependent RNA polymerase catalyzes the transcription of DNA into RNA using the four ribonucleoside triphosphates as substrates. The polypeptide is DNA-directed RNA polymerase subunit beta' (Petrotoga mobilis (strain DSM 10674 / SJ95)).